Consider the following 346-residue polypeptide: N-acetyl-gamma-glutamyl-phosphate reductase (346 aa).

The active site involves cysteine 151.

Belongs to the NAGSA dehydrogenase family. Type 1 subfamily.

It localises to the cytoplasm. It carries out the reaction N-acetyl-L-glutamate 5-semialdehyde + phosphate + NADP(+) = N-acetyl-L-glutamyl 5-phosphate + NADPH + H(+). The protein operates within amino-acid biosynthesis; L-arginine biosynthesis; N(2)-acetyl-L-ornithine from L-glutamate: step 3/4. Its function is as follows. Catalyzes the NADPH-dependent reduction of N-acetyl-5-glutamyl phosphate to yield N-acetyl-L-glutamate 5-semialdehyde. The chain is N-acetyl-gamma-glutamyl-phosphate reductase from Ehrlichia chaffeensis (strain ATCC CRL-10679 / Arkansas).